Here is a 508-residue protein sequence, read N- to C-terminus: Serine/threonine protein kinase OSK3 (508 aa).

One can recognise a Protein kinase domain in the interval 17–269 (YNLGRTLGIG…IREIREHQWF (253 aa)). ATP-binding positions include 23-31 (LGIGSFGKV) and K46. D140 serves as the catalytic Proton acceptor. The UBA domain occupies 290 to 330 (MIDEDTLQDVVNLGYGKDHVCESLRNRLQNEATVAYYLLLD). Residues 459–507 (NGRLPAVIKFEIQLYKTRDEKYLLDMQRVTGPQLLFLDFCADFLTKLRV) enclose the KA1 domain.

The protein belongs to the protein kinase superfamily. Ser/Thr protein kinase family. As to quaternary structure, interacts with HDR1. In terms of tissue distribution, strongly expressed in immature seeds. Mostly expressed in panicles, and to a lower extent, in leaf sheaths.

It localises to the nucleus. It catalyses the reaction L-seryl-[protein] + ATP = O-phospho-L-seryl-[protein] + ADP + H(+). It carries out the reaction L-threonyl-[protein] + ATP = O-phospho-L-threonyl-[protein] + ADP + H(+). This is Serine/threonine protein kinase OSK3 from Oryza sativa subsp. indica (Rice).